Consider the following 200-residue polypeptide: Recombination protein RecR (200 aa).

The C4-type zinc finger occupies C59–C74. Residues G82–P177 enclose the Toprim domain.

This sequence belongs to the RecR family.

May play a role in DNA repair. It seems to be involved in an RecBC-independent recombinational process of DNA repair. It may act with RecF and RecO. This Bifidobacterium animalis subsp. lactis (strain AD011) protein is Recombination protein RecR.